A 188-amino-acid polypeptide reads, in one-letter code: ATP synthase subunit p18, mitochondrial (188 aa).

The N-terminal 18 residues, 1-18 (MMRRVYSPVFCSVAAARF), are a transit peptide targeting the mitochondrion. PPR repeat units lie at residues 36–70 (TNTAPWIEKIKKCKYYDEAGEVLVNMNVSNCPPDI), 75–109 (ATLQCIYQSPSKQSTPVDNESKFCAMMDLLEEMQH), and 116–146 (NEESWTWVMKECVKSGQFRLGYCIQQVMETE).

In terms of assembly, F-type ATPases have 2 components, F(1) - the catalytic core - and F(o) - the membrane proton channel. F(1) has five subunits: alpha(3), beta(3), gamma(1), delta(1), epsilon(1), plus the additional subunit P18 (Tb427.05.1710) that is not present in F(1)F(o) ATP synthase from metazoa. Subunit P18 (Tb927.5.1710) interacts with the alpha subunit with a 1:1 stoichiometry; the interaction is direct. Subunit gamma is part of the central stalk. F(o) has three main subunits: a, b and c. The trypanosomal ATPase complex contains additional subunits that are not present in the F(1)F(o) ATP synthase from metazoa.

The protein localises to the mitochondrion. It localises to the mitochondrion inner membrane. Functionally, mitochondrial membrane ATP synthase (F(1)F(o) ATP synthase) produces ATP from ADP in the presence of a proton gradient across the membrane which is generated by electron transport complexes of the respiratory chain. F-type ATPases consist of two structural domains, F(1) - containing the extramembraneous catalytic core, and F(o) - containing the membrane proton channel, linked together by a central stalk and a peripheral stalk. During catalysis, ATP synthesis in the catalytic domain of F(1) is coupled via a rotary mechanism of the central stalk subunits to proton translocation. Subunits alpha and beta form the catalytic core in F(1). Rotation of the central stalk against the surrounding alpha(3)beta(3) subunits leads to hydrolysis of ATP in three separate catalytic sites on the beta subunits. Contrary to the procyclic, insect form that requires F(1)F(o) ATP synthase for ATP synthesis, the bloodstream form relies on ATP hydrolysis by F(1)F(o) ATP synthase to maintain its mitochondrial membrane potential. This Trypanosoma brucei brucei protein is ATP synthase subunit p18, mitochondrial.